The sequence spans 490 residues: Betaine aldehyde dehydrogenase (490 aa).

A K(+)-binding site is contributed by Asp-93. NAD(+) is bound at residue 150-152 (GAW). The Charge relay system role is filled by Lys-162. 176-179 (KPSE) contacts NAD(+). Residue Val-180 participates in K(+) binding. Residue 230–233 (GIAS) coordinates NAD(+). Position 246 (Leu-246) interacts with K(+). Glu-252 serves as the catalytic Proton acceptor. Residues Gly-254, Cys-286, and Glu-387 each coordinate NAD(+). Cys-286 acts as the Nucleophile in catalysis. Residue Cys-286 is modified to Cysteine sulfenic acid (-SOH). Positions 457 and 460 each coordinate K(+). The active-site Charge relay system is Glu-464.

Belongs to the aldehyde dehydrogenase family. In terms of assembly, dimer of dimers. K(+) is required as a cofactor.

The catalysed reaction is betaine aldehyde + NAD(+) + H2O = glycine betaine + NADH + 2 H(+). It participates in amine and polyamine biosynthesis; betaine biosynthesis via choline pathway; betaine from betaine aldehyde: step 1/1. Its function is as follows. Involved in the biosynthesis of the osmoprotectant glycine betaine. Catalyzes the irreversible oxidation of betaine aldehyde to the corresponding acid. This is Betaine aldehyde dehydrogenase from Pectobacterium atrosepticum (strain SCRI 1043 / ATCC BAA-672) (Erwinia carotovora subsp. atroseptica).